A 233-amino-acid polypeptide reads, in one-letter code: MGRGKVQVRRIENEVSRQVTFSKRRPGLLKKAHEIAVLCDVDVAAIVFSAKGNLFHYASSHTTMERILEKYDRHELLSEGNNVIEEFPELEGSMSYDHIKLRGRIEALKKSQRNLMGQELDSLTLQDIQQLENQIDTSLNNIRSRKEKLLMEKNTILEKKITELETLHTCIRASPTKAAAPPACNTADAFVPNLNICCGDSGEPETVTAPLGWTSSNNGLPWWMLQSSSNGKS.

The MADS-box domain occupies 1-61 (MGRGKVQVRR…GNLFHYASSH (61 aa)). Positions 91–184 (EGSMSYDHIK…PTKAAAPPAC (94 aa)) constitute a K-box domain.

Expressed in developing seeds and seedling shoots.

It localises to the nucleus. Functionally, probable transcription factor. In Oryza sativa subsp. japonica (Rice), this protein is MADS-box transcription factor 20 (MADS20).